The following is a 359-amino-acid chain: Hereditary hemochromatosis protein homolog (359 aa).

The signal sequence occupies residues 1 to 24; that stretch reads MSLSAGLPVRPLLLLLLLLWSVAP. The alpha-1 stretch occupies residues 25–126; that stretch reads QALPPRSHSL…KVTKLGVVSE (102 aa). The Extracellular portion of the chain corresponds to 25-318; sequence QALPPRSHSL…WEPLQSQAMI (294 aa). N-linked (GlcNAc...) asparagine glycosylation is found at N114, N142, N166, and N246. Residues 127-217 are alpha-2; the sequence is SHILQVVLGC…ELGRGVLGQQ (91 aa). 2 disulfides stabilise this stretch: C136–C199 and C237–C294. Residues 218-309 are alpha-3; it reads VPTLVKVTRH…GLDQPLTASW (92 aa). Positions 219-308 constitute an Ig-like C1-type domain; it reads PTLVKVTRHW…PGLDQPLTAS (90 aa). The interval 310–318 is connecting peptide; it reads EPLQSQAMI. The helical transmembrane segment at 319 to 339 threads the bilayer; sequence IGIISGVTVCAIFLVGILFLI. Over 340-359 the chain is Cytoplasmic; that stretch reads LRKRKASGGTMGGYVLTDCE.

The protein belongs to the MHC class I family. As to quaternary structure, binds TFR through the extracellular domain in a pH-dependent manner.

It localises to the cell membrane. In terms of biological role, binds to transferrin receptor (TFR) and reduces its affinity for iron-loaded transferrin. This is Hereditary hemochromatosis protein homolog (Hfe) from Mus musculus (Mouse).